Consider the following 291-residue polypeptide: 3-hydroxy-5-phosphonooxypentane-2,4-dione thiolase (291 aa).

The active-site Schiff-base intermediate with substrate is the K203.

This sequence belongs to the DeoC/FbaB aldolase family. Homodecamer.

It is found in the cytoplasm. The catalysed reaction is dihydroxyacetone phosphate + acetyl-CoA = 3-hydroxy-2,4-dioxopentyl phosphate + CoA. Its function is as follows. Involved in the degradation of phospho-AI-2, thereby terminating induction of the lsr operon and closing the AI-2 signaling cycle. Catalyzes the transfer of an acetyl moiety from 3-hydroxy-5-phosphonooxypentane-2,4-dione to CoA to form glycerone phosphate and acetyl-CoA. This chain is 3-hydroxy-5-phosphonooxypentane-2,4-dione thiolase, found in Salmonella typhimurium (strain LT2 / SGSC1412 / ATCC 700720).